The primary structure comprises 552 residues: Segmentation polarity homeobox protein engrailed (552 aa).

Residues 93-108 (SGSGSPASCSTPASST) show a composition bias toward low complexity. Disordered stretches follow at residues 93 to 112 (SGSG…PLTI), 130 to 171 (THTT…TAKP), 309 to 419 (PAAP…GGKN), and 433 to 460 (DRPS…PRTA). The segment covering 135-151 (EEEEAEEDDDIDVDVDD) has biased composition (acidic residues). The segment covering 317-382 (PPLSSSASSL…SGSGVNASSP (66 aa)) has biased composition (low complexity). Basic and acidic residues predominate over residues 446-457 (QPKDKTNDEKRP). The homeobox DNA-binding region spans 454–513 (EKRPRTAFSSEQLARLKREFNENRYLTERRRQQLSSELGLNEAQIKIWFQNKRAKIKKST).

It belongs to the engrailed homeobox family. Post-translationally, phosphorylated. Phosphorylation may directly or allosterically modify its function.

Its subcellular location is the nucleus. In terms of biological role, this protein specifies the body segmentation pattern. It is required for the development of the central nervous system. Transcriptional regulator that represses activated promoters. Wg signaling operates by inactivating the SGG repression of EN autoactivation. The protein is Segmentation polarity homeobox protein engrailed (en) of Drosophila melanogaster (Fruit fly).